Consider the following 172-residue polypeptide: Stellate protein CG33236/CG33240/CG33244/CG33245 (172 aa).

This sequence belongs to the casein kinase 2 subunit beta family. As to quaternary structure, interacts in vitro with the casein kinase 2 alpha subunit (CkII-alpha). The relevance of such interaction is however unclear in vivo. Probably not expressed in wild-type flies. In males lacking the Y chromosome, it is testis-specific and constitutes the main component of star-shaped crystals.

Unknown. In males lacking the Y chromosome, its strong overexpression leads to the appearance of proteinaceous star-shaped crystals in the primary spermatocytes causing meiotic drive, possibly by interfering with normal casein kinase 2 activity. This Drosophila melanogaster (Fruit fly) protein is Stellate protein CG33236/CG33240/CG33244/CG33245 (Ste:CG33236).